A 321-amino-acid chain; its full sequence is Glucokinase (321 aa).

8 to 13 (GDVGGT) provides a ligand contact to ATP.

Belongs to the bacterial glucokinase family.

The protein resides in the cytoplasm. It catalyses the reaction D-glucose + ATP = D-glucose 6-phosphate + ADP + H(+). This Salmonella heidelberg (strain SL476) protein is Glucokinase.